A 462-amino-acid chain; its full sequence is Cysteine--tRNA ligase (462 aa).

C28 serves as a coordination point for Zn(2+). The 'HIGH' region signature appears at 30-40 (ITVYDLCHIGH). The Zn(2+) site is built by C210, H235, and E239. Residues 267 to 271 (KMSKS) carry the 'KMSKS' region motif. Residue K270 participates in ATP binding.

The protein belongs to the class-I aminoacyl-tRNA synthetase family. As to quaternary structure, monomer. Zn(2+) is required as a cofactor.

The protein resides in the cytoplasm. It carries out the reaction tRNA(Cys) + L-cysteine + ATP = L-cysteinyl-tRNA(Cys) + AMP + diphosphate. This chain is Cysteine--tRNA ligase, found in Erwinia tasmaniensis (strain DSM 17950 / CFBP 7177 / CIP 109463 / NCPPB 4357 / Et1/99).